The chain runs to 532 residues: Germ cell nuclear acidic-1 protein (532 aa).

Residues 1–10 (MPTPFRDLHN) show a composition bias toward basic and acidic residues. 3 disordered regions span residues 1 to 50 (MPTP…EPIS), 84 to 181 (REAP…GNFE), and 213 to 253 (YISE…DRKQ). The segment covering 14 to 32 (ASASSYETAWSSSFSSRRS) has biased composition (low complexity). Composition is skewed to basic and acidic residues over residues 39–48 (SNLKEIKDEP), 94–107 (LLQKIEKEDERDML), and 124–133 (KPKEVKKALK). A compositionally biased stretch (acidic residues) spans 213-235 (YISEESSEEESEEEEEDVDDEEY). Basic and acidic residues predominate over residues 236-251 (RESSPEVEAKISYSDR). The SprT-like domain occupies 308–398 (RRIFSAIPSE…GARCSSVFKS (91 aa)). Positions 468–489 (AKPVGPILSNSSKPSPPAPRRI) are disordered.

The protein belongs to the serine-aspartate repeat-containing protein (SDr) family. In terms of assembly, interacts with top-2; this interaction allows the resolution of topoisomerase II (top-2) DNA-protein cross-links. As to expression, mainly expressed in germ cells and early embryonic, proliferating cells.

The protein localises to the chromosome. May play a role in DNA-protein cross-links (DPCs) clearance through a SUMO-dependent recruitment to sites of DPCs, ensuring the genomic stability by protecting germ cells and early embryos from various sources of damage. May resolve the topoisomerase II (top-2) DPCs. Limits replication stress and DNA double-strand breaks. The chain is Germ cell nuclear acidic-1 protein from Caenorhabditis elegans.